Consider the following 61-residue polypeptide: Large ribosomal subunit protein uL30 (61 aa).

This sequence belongs to the universal ribosomal protein uL30 family. In terms of assembly, part of the 50S ribosomal subunit.

The protein is Large ribosomal subunit protein uL30 of Methylococcus capsulatus (strain ATCC 33009 / NCIMB 11132 / Bath).